The chain runs to 135 residues: Transcription antitermination protein NusB (135 aa).

Belongs to the NusB family.

Functionally, involved in transcription antitermination. Required for transcription of ribosomal RNA (rRNA) genes. Binds specifically to the boxA antiterminator sequence of the ribosomal RNA (rrn) operons. The protein is Transcription antitermination protein NusB of Shewanella halifaxensis (strain HAW-EB4).